The following is a 299-amino-acid chain: Protease HtpX homolog (299 aa).

The next 2 membrane-spanning stretches (helical) occupy residues 5–25 (IFLF…VLSV) and 44–64 (MVAL…MSLA). Zn(2+) is bound at residue histidine 155. The active site involves glutamate 156. Residue histidine 159 participates in Zn(2+) binding. A run of 2 helical transmembrane segments spans residues 170 to 190 (LLQG…AWIA) and 205 to 225 (FIAV…VVFA). Glutamate 231 contributes to the Zn(2+) binding site.

Belongs to the peptidase M48B family. Zn(2+) serves as cofactor.

It is found in the cell membrane. This Bacillus pumilus (strain SAFR-032) protein is Protease HtpX homolog.